Here is a 798-residue protein sequence, read N- to C-terminus: Probable DEAD-box ATP-dependent RNA helicase 48 (798 aa).

Disordered regions lie at residues 76-100, 117-148, and 236-257; these read KMWG…MSPK, DFWN…NSPI, and FRKN…GKMI. The segment covering 132–148 has biased composition (low complexity); the sequence is GSRSGSDSIDSTSNSPI. Residues 242 to 252 are compositionally biased toward acidic residues; sequence STEEDSDEEGD. The short motif at 328–356 is the Q motif element; it reads KRFDESCISPLTLKALSASGILKMTRVQD. Residues 359 to 543 form the Helicase ATP-binding domain; sequence LSECLDGKDA…QLVLKRDHSY (185 aa). 372-379 provides a ligand contact to ATP; that stretch reads AKTGTGKS. Residues 491–494 carry the DEAD box motif; that stretch reads DEAD. The region spanning 577-726 is the Helicase C-terminal domain; it reads LLKEHINNTP…SIVKHQVDQS (150 aa).

The protein belongs to the DEAD box helicase family.

The enzyme catalyses ATP + H2O = ADP + phosphate + H(+). In Arabidopsis thaliana (Mouse-ear cress), this protein is Probable DEAD-box ATP-dependent RNA helicase 48 (RH48).